Consider the following 455-residue polypeptide: Bifunctional protein GlmU (455 aa).

Residues Met1–Arg230 are pyrophosphorylase. UDP-N-acetyl-alpha-D-glucosamine contacts are provided by residues Leu9–Gly12, Lys23, Gln73, Gly78–Thr79, Ser101–Asp103, Gly140, Glu155, Asn170, and Asn228. A Mg(2+)-binding site is contributed by Asp103. Asn228 serves as a coordination point for Mg(2+). Residues Ser231 to Asp251 are linker. Residues Gly252–Trp455 form an N-acetyltransferase region. The UDP-N-acetyl-alpha-D-glucosamine site is built by Arg333 and Lys351. His363 (proton acceptor) is an active-site residue. UDP-N-acetyl-alpha-D-glucosamine is bound by residues Tyr366 and Asn377. Acetyl-CoA contacts are provided by residues Asn386–Tyr387, Ser405, Ala423, and Arg440.

This sequence in the N-terminal section; belongs to the N-acetylglucosamine-1-phosphate uridyltransferase family. It in the C-terminal section; belongs to the transferase hexapeptide repeat family. Homotrimer. The cofactor is Mg(2+).

The protein resides in the cytoplasm. It catalyses the reaction alpha-D-glucosamine 1-phosphate + acetyl-CoA = N-acetyl-alpha-D-glucosamine 1-phosphate + CoA + H(+). The catalysed reaction is N-acetyl-alpha-D-glucosamine 1-phosphate + UTP + H(+) = UDP-N-acetyl-alpha-D-glucosamine + diphosphate. Its pathway is nucleotide-sugar biosynthesis; UDP-N-acetyl-alpha-D-glucosamine biosynthesis; N-acetyl-alpha-D-glucosamine 1-phosphate from alpha-D-glucosamine 6-phosphate (route II): step 2/2. It functions in the pathway nucleotide-sugar biosynthesis; UDP-N-acetyl-alpha-D-glucosamine biosynthesis; UDP-N-acetyl-alpha-D-glucosamine from N-acetyl-alpha-D-glucosamine 1-phosphate: step 1/1. It participates in bacterial outer membrane biogenesis; LPS lipid A biosynthesis. Catalyzes the last two sequential reactions in the de novo biosynthetic pathway for UDP-N-acetylglucosamine (UDP-GlcNAc). The C-terminal domain catalyzes the transfer of acetyl group from acetyl coenzyme A to glucosamine-1-phosphate (GlcN-1-P) to produce N-acetylglucosamine-1-phosphate (GlcNAc-1-P), which is converted into UDP-GlcNAc by the transfer of uridine 5-monophosphate (from uridine 5-triphosphate), a reaction catalyzed by the N-terminal domain. This Limosilactobacillus fermentum (strain NBRC 3956 / LMG 18251) (Lactobacillus fermentum) protein is Bifunctional protein GlmU.